Reading from the N-terminus, the 356-residue chain is DNA polymerase IV (356 aa).

The UmuC domain occupies Ile-7–Gly-188. Mg(2+) is bound by residues Asp-11 and Asp-106. Glu-107 is a catalytic residue.

The protein belongs to the DNA polymerase type-Y family. As to quaternary structure, monomer. Requires Mg(2+) as cofactor.

The protein localises to the cytoplasm. It catalyses the reaction DNA(n) + a 2'-deoxyribonucleoside 5'-triphosphate = DNA(n+1) + diphosphate. In terms of biological role, poorly processive, error-prone DNA polymerase involved in untargeted mutagenesis. Copies undamaged DNA at stalled replication forks, which arise in vivo from mismatched or misaligned primer ends. These misaligned primers can be extended by PolIV. Exhibits no 3'-5' exonuclease (proofreading) activity. May be involved in translesional synthesis, in conjunction with the beta clamp from PolIII. This is DNA polymerase IV from Listeria monocytogenes serotype 4a (strain HCC23).